A 571-amino-acid polypeptide reads, in one-letter code: Glutamine--tRNA ligase (571 aa).

Residues 35 to 45 (PEPNGYLHIGH) carry the 'HIGH' region motif. ATP-binding positions include 36–38 (EPN) and 42–48 (HIGHAKS). Residues Asp-68 and Tyr-213 each coordinate L-glutamine. ATP is bound by residues Thr-232, 262–263 (RL), and 270–272 (LSK). The 'KMSKS' region motif lies at 269–273 (ILSKR).

This sequence belongs to the class-I aminoacyl-tRNA synthetase family. As to quaternary structure, monomer.

Its subcellular location is the cytoplasm. It carries out the reaction tRNA(Gln) + L-glutamine + ATP = L-glutaminyl-tRNA(Gln) + AMP + diphosphate. The polypeptide is Glutamine--tRNA ligase (Buchnera aphidicola subsp. Acyrthosiphon pisum (strain Tuc7)).